We begin with the raw amino-acid sequence, 81 residues long: Protein Vpu (81 aa).

Over 1–7 (MQPLVII) the chain is Extracellular. A helical membrane pass occupies residues 8–28 (AIAALVVAIIIAIVVWTIVYI). Residues 29-81 (EYRRIKRQRKIDCLIDRIRERAEDSGNESEGEREELSKLVEMGHHAPWDVDDL) are Cytoplasmic-facing. The tract at residues 50 to 81 (AEDSGNESEGEREELSKLVEMGHHAPWDVDDL) is disordered. Ser53 and Ser57 each carry phosphoserine; by host CK2. Positions 62-81 (EELSKLVEMGHHAPWDVDDL) are enriched in basic and acidic residues.

Belongs to the HIV-1 VPU protein family. Homopentamer. Interacts with host CD4 and BRTC; these interactions induce proteasomal degradation of CD4. Interacts with host BST2; this interaction leads to the degradation of host BST2. Interacts with host FBXW11. Interacts with host AP1M1; this interaction plays a role in the mistrafficking and subsequent degradation of host BST2. Interacts with host RANBP2; this interaction allows Vpu to down-regulate host BLM sumoylation. Phosphorylated by host CK2. This phosphorylation is necessary for interaction with human BTRC and degradation of CD4.

It localises to the host membrane. Its activity is regulated as follows. Ion channel activity is inhibited by hexamethylene amiloride in vitro. Its function is as follows. Enhances virion budding by targeting host CD4 and Tetherin/BST2 to proteasome degradation. Degradation of CD4 prevents any unwanted premature interactions between viral Env and its host receptor CD4 in the endoplasmic reticulum. Degradation of antiretroviral protein Tetherin/BST2 is important for virion budding, as BST2 tethers new viral particles to the host cell membrane. Mechanistically, Vpu bridges either CD4 or BST2 to BTRC, a substrate recognition subunit of the Skp1/Cullin/F-box protein E3 ubiquitin ligase, induces their ubiquitination and subsequent proteasomal degradation. The alteration of the E3 ligase specificity by Vpu seems to promote the degradation of host IKBKB, leading to NF-kappa-B down-regulation and subsequent apoptosis. Acts as a viroporin that forms an oligomeric ion channel in membranes. Modulates the host DNA repair mechanisms to promote degradation of nuclear viral cDNA in cells that are already productively infected in order to suppress immune sensing and proviral hyper-integration (superinfection). Manipulates PML-NBs and modulates SUMOylation of host BLM protein thereby enhancing its DNA-end processing activity toward viral unintegrated linear DNA. Also inhibits RAD52-mediated homologous repair of viral cDNA, preventing the generation of dead-end circular forms of single copies of the long terminal repeat and permitting sustained nucleolytic attack. This chain is Protein Vpu, found in Human immunodeficiency virus type 1 group M subtype D (isolate NDK) (HIV-1).